Consider the following 159-residue polypeptide: Lipoprotein LpqH (159 aa).

The N-terminal stretch at 1–21 (MKRGLTVAVAGAAILVAGLSG) is a signal peptide. The N-palmitoyl cysteine moiety is linked to residue C22. A lipid anchor (S-diacylglycerol cysteine) is attached at C22. The segment at 24 to 51 (SNKSTTGSGETTTAAGTTASPGAASGPK) is disordered. Residues 27-49 (STTGSGETTTAAGTTASPGAASG) show a composition bias toward low complexity.

The protein belongs to the mycobacterial 19 kDa antigen family. Modified by Lgt on Cys-22 with an S-linked diacylglycerol with a mixture of C16, C18 and C19 fatty acids, signal peptide is removed by LspA, modifed by Lnt with an amide-linked mixture of C16 and C19 fatty acids.

The protein localises to the cell membrane. Functionally, might be involved in ligand transport. A host TLR2 agonist, modifies host gene expression in response to pathogen. This Mycobacterium bovis (strain ATCC BAA-935 / AF2122/97) protein is Lipoprotein LpqH (lpqH).